Here is a 628-residue protein sequence, read N- to C-terminus: Cystathionine gamma-synthase-like enzyme iboG2 (628 aa).

Y313 lines the substrate pocket. The residue at position 417 (K417) is an N6-(pyridoxal phosphate)lysine.

This sequence belongs to the trans-sulfuration enzymes family. It depends on pyridoxal 5'-phosphate as a cofactor.

It functions in the pathway secondary metabolite biosynthesis. Functionally, cystathionine gamma-synthase-like enzyme; part of the gene cluster that mediates the biosynthesis of the psychoactive metabolites ibotenic acid and muscimol. The first committed step is glutamate hydroxylation by the 2-oxoglutarate-dependent dioxygenase iboH, and the last step is decarboxylation of ibotenic acid to muscimol by the decarboxylase iboD. The order of the intermediate reactions is somewhat ambiguous. IboA likely activates the carboxylic acid at position 5 to introduce an amide bond, and the flavin monooxygenase iboF generates the N-O bond. There are several options for the latter step. One option is that iboF directly hydroxylates the amide nitrogen formed by iboA to produce a hydroxamic acid species. Another option is that iboF hydroxylates an external N-containing compound, whose resulting N-O bond is subsequently introduced into the hydroxyglutamate scaffold. The paralogous PLP-dependent cystathionine gamma-synthase-like enzymes iboG1 and iboG2 are likely involved in substitution of the OH group at position 3 by the O-N moiety. The first cyclic intermediate is most probably tricholomic acid which is likely desaturated to ibotenic acid by the cytochrome P450 monooxygenase iboC. The polypeptide is Cystathionine gamma-synthase-like enzyme iboG2 (Amanita muscaria (strain Koide BX008)).